The primary structure comprises 454 residues: Tubulin beta-2 chain (454 aa).

Gln11, Glu69, Ser138, Gly142, Thr143, Gly144, Asn204, and Asn226 together coordinate GTP. Glu69 provides a ligand contact to Mg(2+). Residues 426 to 454 (QEASVDDEAMEDDAEAEGGAGQNEAVEEF) form a disordered region. Positions 429–441 (SVDDEAMEDDAEA) are enriched in acidic residues.

The protein belongs to the tubulin family. As to quaternary structure, dimer of alpha and beta chains. A typical microtubule is a hollow water-filled tube with an outer diameter of 25 nm and an inner diameter of 15 nM. Alpha-beta heterodimers associate head-to-tail to form protofilaments running lengthwise along the microtubule wall with the beta-tubulin subunit facing the microtubule plus end conferring a structural polarity. Microtubules usually have 13 protofilaments but different protofilament numbers can be found in some organisms and specialized cells. Mg(2+) is required as a cofactor.

It is found in the cytoplasm. The protein localises to the cytoskeleton. It localises to the spindle. The protein resides in the nucleus. In terms of biological role, tubulin is the major constituent of microtubules, a cylinder consisting of laterally associated linear protofilaments composed of alpha- and beta-tubulin heterodimers. Microtubules grow by the addition of GTP-tubulin dimers to the microtubule end, where a stabilizing cap forms. Below the cap, tubulin dimers are in GDP-bound state, owing to GTPase activity of alpha-tubulin. Functionally, this is the major beta tubulin of mitotic spindle. This chain is Tubulin beta-2 chain (BETC), found in Physarum polycephalum (Slime mold).